The sequence spans 225 residues: MAALASSLIRQKREVREPGGSRPVSAQRRVCPRGTKSLCQKQLLILLSKVRLCGGRPTRQDRGPEPQLKGIVTKLFCRQGFYLQANPDGSIQGTPEDTSSFTHFNLIPVGLRVVTIQSAKLGHYMAMNAEGLLYSSPHFTAECRFKECVFENYYVLYASALYRQRRSGRAWYLGLDKEGRVMKGNRVKKTKAAAHFVPKLLEVAMYREPSLHSVPETSPSSPPAH.

The tract at residues 1-28 is disordered; it reads MAALASSLIRQKREVREPGGSRPVSAQR.

It belongs to the heparin-binding growth factors family. As to expression, brain and eye, and in a segmental pattern of the embryonic body wall. In adult olfactory bulb, hippocampus and most concentrated in Purkinje cell layer of the cerebellum.

The protein localises to the nucleus. Its function is as follows. Probably involved in nervous system development and function. The polypeptide is Fibroblast growth factor 11 (Fgf11) (Mus musculus (Mouse)).